We begin with the raw amino-acid sequence, 201 residues long: Small ribosomal subunit protein uS4c (201 aa).

An S4 RNA-binding domain is found at 89 to 150 (MRLDNILFRL…KQRSKVLIQN (62 aa)).

The protein belongs to the universal ribosomal protein uS4 family. Part of the 30S ribosomal subunit. Contacts protein S5. The interaction surface between S4 and S5 is involved in control of translational fidelity.

The protein resides in the plastid. It localises to the chloroplast. Functionally, one of the primary rRNA binding proteins, it binds directly to 16S rRNA where it nucleates assembly of the body of the 30S subunit. With S5 and S12 plays an important role in translational accuracy. The sequence is that of Small ribosomal subunit protein uS4c (rps4) from Dioscorea elephantipes (Elephant's foot yam).